We begin with the raw amino-acid sequence, 301 residues long: tRNA pseudouridine synthase B (301 aa).

Catalysis depends on Asp-45, which acts as the Nucleophile.

Belongs to the pseudouridine synthase TruB family. Type 1 subfamily.

It catalyses the reaction uridine(55) in tRNA = pseudouridine(55) in tRNA. Responsible for synthesis of pseudouridine from uracil-55 in the psi GC loop of transfer RNAs. This Streptomyces avermitilis (strain ATCC 31267 / DSM 46492 / JCM 5070 / NBRC 14893 / NCIMB 12804 / NRRL 8165 / MA-4680) protein is tRNA pseudouridine synthase B.